Consider the following 337-residue polypeptide: Transcription initiation factor IIB (337 aa).

A TFIIB-type zinc finger spans residues 36–68 (SVQSVCPECGSRQLVHDYERAELVCQNCGLVLD). Positions 41, 44, 60, and 63 each coordinate Zn(2+). A run of 2 repeats spans residues 154 to 237 (SELD…SREL) and 248 to 329 (DYVP…ELAE).

The protein belongs to the TFIIB family.

Stabilizes TBP binding to an archaeal box-A promoter. Also responsible for recruiting RNA polymerase II to the pre-initiation complex (DNA-TBP-TFIIB). The sequence is that of Transcription initiation factor IIB from Methanoculleus marisnigri (strain ATCC 35101 / DSM 1498 / JR1).